The primary structure comprises 635 residues: Sodium- and chloride-dependent transporter XTRP3B (635 aa).

Residues 1 to 38 (MESPSAHAVSLPEDEELQPWGGAGGPGQHPGRPRSTEC) form a disordered region. Topologically, residues 1 to 56 (MESPSAHAVSLPEDEELQPWGGAGGPGQHPGRPRSTECAHPGVVEKVRPKWDNPLQ) are cytoplasmic. A helical transmembrane segment spans residues 57 to 77 (FLLVCISYAVGLGNVWRFPYL). The Extracellular segment spans residues 78–85 (CQMYGGGN). The chain crosses the membrane as a helical span at residues 86-106 (FLVPYIIMLIVEGMPLLYLEL). Residues 107-127 (AVGQRMRQGSIGAWRTISPYL) are Cytoplasmic-facing. The chain crosses the membrane as a helical span at residues 128 to 148 (SGVGIASLVVSFLASVYFNVI). Topologically, residues 149–208 (NTWALWYLFHSFQDPLPWSVCPLNSNHTGYDEECEKASSTQYFWYRKTLNISPSIQENGG) are extracellular. N-linked (GlcNAc...) asparagine glycosylation is present at asparagine 174. A helical transmembrane segment spans residues 209–229 (VQWEPALCLTLAWLMVYLCIL). Over 230–237 (RGTESTGK) the chain is Cytoplasmic. A helical transmembrane segment spans residues 238–258 (VVYFTTSLPYFVLIIYLVRGL). Topologically, residues 259–284 (TLHGATNGLAYMFTPKIEQLANPKAW) are extracellular. The chain crosses the membrane as a helical span at residues 285 to 305 (INAATQIFFSLGLGCGGLIAF). At 306–319 (ASYNEPSNDCQKHA) the chain is on the cytoplasmic side. A helical transmembrane segment spans residues 320 to 340 (LIVSVINSTTAIFSSIVTFSI). Residues 341–432 (YGFKATFNYE…EAIKNMEVSQ (92 aa)) lie on the Extracellular side of the membrane. N-linked (GlcNAc...) asparagine glycosylation occurs at asparagine 400. Residues 433–453 (LWSVLYFFMLLTLGMGSMVGT) form a helical membrane-spanning segment. Topologically, residues 454–474 (GTAILTPLTDSKIISSYLPKE) are cytoplasmic. Residues 475-495 (AISGLVCLLNCAIGMVFTMEA) traverse the membrane as a helical segment. The Extracellular segment spans residues 496-508 (GNYWFDLFNDYTA). A helical transmembrane segment spans residues 509–529 (TLSLLLIVLVETIAVCYVYGL). The Cytoplasmic portion of the chain corresponds to 530-547 (KRFESDLRAMTGRTLSWY). The helical transmembrane segment at 548 to 568 (WKVMWAFVSPLLIVGLFIFYL) threads the bilayer. The Extracellular segment spans residues 569–597 (SDYILTGTLQYQAWDATQGHVVTKDYPTY). Residues 598 to 618 (ALAVIGLLVASSTMCIPLVAL) form a helical membrane-spanning segment. At 619–635 (GTFVTRHFKIREQFSAA) the chain is on the cytoplasmic side.

The protein belongs to the sodium:neurotransmitter symporter (SNF) (TC 2.A.22) family. SLC6A20 subfamily. Interacts with CLTRN. In terms of tissue distribution, detected only in kidney and lung.

It is found in the apical cell membrane. Functionally, does not show transporter activity with a range of tested amino acids including proline, glutamine, glutamic acid, leucine, alanine, histidine, glycine and arginine. In Mus musculus (Mouse), this protein is Sodium- and chloride-dependent transporter XTRP3B (Slc6a20b).